Consider the following 20-residue polypeptide: VQGMVYCDTCRSANALGFMR.

Belongs to the Ole e I family.

It is found in the secreted. This is Pollen allergen Beta v 1 from Beta vulgaris (Sugar beet).